The primary structure comprises 447 residues: MSRRPCSCALRPPRCSCSASPSAVTAAGRPRPSDSCKEESSTLSVKMKCDFNCNHVHSGLKLVKPDDIGRLVSYTPAYLEGSCKDCIKDYERLSCIGSPIVSPRIVQLETESKRLHNKENQHVQQTLNSTNEIEALETSRLYEDSGYSSFSLQSGLSEHEEGSLLEENFGDSLQSCLLQIQSPDQYPNKNLLPVLHFEKVVCSTLKKNAKRNPKVDREMLKEIIARGNFRLQNIIGRKMGLECVDILSELFRRGLRHVLATILAQLSDMDLINVSKVSTTWKKILEDDKGAFQLYSKAIQRVTENNNKFSPHASTREYVMFRTPLASVQKSAAQTSLKKDAQTKLSNQGDQKGSTYSRHNEFSEVAKTLKKNESLKACIRCNSPAKYDCYLQRATCKREGCGFDYCTKCLCNYHTTKDCSDGKLLKASCKIGPLPGTKKSKKNLRRL.

Residues serine 94 and serine 102 each carry the phosphoserine modification. The interaction with EVI5 stretch occupies residues alanine 135–valine 244. Positions leucine 250–serine 296 constitute an F-box domain. The sufficient for interaction with RPS6KA2; Prevents association of CDC20 with RPS6KA2 stretch occupies residues threonine 261–lysine 339. Positions threonine 261–cysteine 409 are requires for efficient binding to CDC20. Positions asparagine 305–leucine 447 are inhibits APC ubiquitin ligase activity. The tract at residues arginine 322–leucine 325 is competitively blocks access of APC substrates to the D-box coreceptor formed by FZR1 and ANAPC10. Residues leucine 337–arginine 358 form a disordered region. Positions threonine 343–serine 357 are enriched in polar residues. The ZBR-type zinc finger occupies serine 374–glycine 422. 8 residues coordinate Zn(2+): cysteine 378, cysteine 381, cysteine 396, cysteine 401, cysteine 406, cysteine 409, histidine 414, and cysteine 419. Residues cysteine 378–serine 420 are allows a rapid multiple mono-ubiquitination of the APC substrate, but strongly inhibits the slow ubiquitin chain elongation catalyzed by UBCH10. The tract at residues threonine 437–leucine 447 is sufficient to suppress UBE2S activity; essential for interaction with UBE2S; competitively inhibits the rapide ubiquitin chain elongation by UBE2D1 which blocks UBE2D1 with APC; indispensable for recruitment and position of FBXO5 to the catalytic site of APC; abrogates the inhibition of ubiquitin chain assembly primarily catalyzed by UBE2S; inhibits the ubiquitination by either UBE2C or UBE2D1.

Part of a SCF (SKP1-cullin-F-box) protein ligase complex. Interacts with BTRC; mediates proteolysis by the SCF ubiquitin ligase complex leading to activation of APC in late mitosis and subsequent mitotic progression. Interacts with FZR1/CDH1 and the N-terminal substrate-binding domain of CDC20; prevents APC activation. Also interacts with EVI5 which blocks its phosphorylation by PLK1 and prevents its subsequent binding to BTRC and degradation. Interacts simultaneously with anaphase promoting complex (APC), through at least ANAPC2, CDC23, CDC27, the APC substrate GMNN and the APC activator FZR1. Interacts with UBE2S; interferes with the activity of UBE2S mainly by disrupting the dynamic electrostatic association between the C-terminal tail of UBE2S and ANAPC2. Interacts with RPS6KA2; cooperates to induce the metaphase arrest of early blastomeres; increases and stabilizes interaction of FBXO5 with CDC20. Post-translationally, phosphorylation by CDK2 and subsequently by PLK1 triggers degradation during early mitosis through ubiquitin-mediated proteolysis by the SCF ubiquitin ligase complex containing the F-box protein BTRC. This degradation is necessary for the activation of APC in late mitosis and subsequent mitotic progression. Phosphorylated by RPS6KA2; increases and stabilizes interaction with CDC20. Ubiquitinated by the SCF(BTRC) complex following phosphorylation by PLK1. Undergoes both 'Lys-11' and 'Lys-48'-linked polyubiquitination by APC-FZR1 complex leading to degradation by proteasome during G1 phase. Degraded through the SCF(BTRC) complex; degradation occurs during oocyte maturation, between germinal vesicle breakdown (GVBD) and meiosis I, and is required for the meiosis I-meiosis II transition.

The protein localises to the nucleus. Its subcellular location is the cytoplasm. The protein resides in the cytoskeleton. It is found in the spindle. The protein operates within protein modification; protein ubiquitination. Functionally, regulator of APC activity during mitotic and meiotic cell cycle. During mitotic cell cycle plays a role as both substrate and inhibitor of APC-FZR1 complex. During G1 phase, plays a role as substrate of APC-FZR1 complex E3 ligase. Then switches as an inhibitor of APC-FZR1 complex during S and G2 leading to cell-cycle commitment. As APC inhibitor, prevents the degradation of APC substrates at multiple levels: by interacting with APC and blocking access of APC substrates to the D-box coreceptor, formed by FZR1 and ANAPC10; by suppressing ubiquitin ligation and chain elongation by APC by preventing the UBE2C and UBE2S activities. Plays a role in genome integrity preservation by coordinating DNA replication with mitosis through APC inhibition in interphase to stabilize CCNA2 and GMNN in order to promote mitosis and prevent rereplication and DNA damage-induced cellular senescence. During oocyte maturation, plays a role in meiosis through inactivation of APC-FZR1 complex. Inhibits APC through RPS6KA2 interaction that increases FBXO5 affiniy for CDC20 leading to the metaphase arrest of the second meiotic division before fertilization. Controls entry into the first meiotic division through inactivation of APC-FZR1 complex. Promotes migration and osteogenic differentiation of mesenchymal stem cells. This Homo sapiens (Human) protein is F-box only protein 5.